The following is a 165-amino-acid chain: LOB domain-containing protein 21 (165 aa).

The LOB domain occupies 10–111 (SSCAACKLLK…HDLAVARTRL (102 aa)).

Belongs to the LOB domain-containing protein family.

The protein is LOB domain-containing protein 21 (LBD21) of Arabidopsis thaliana (Mouse-ear cress).